A 492-amino-acid polypeptide reads, in one-letter code: Chitooligosaccharide oxidase (492 aa).

A signal peptide spans 1 to 19 (MHFNTLTCVLVGLVAHTSA). One can recognise an FAD-binding PCMH-type domain in the interval 57–229 (LPFEPAAIAV…VELEFQTFAA (173 aa)). The segment at residues 94–154 (HSYTSLGFGG…GKRALAHGTC (61 aa)) is a cross-link (6-(S-cysteinyl)-8alpha-(pros-histidyl)-FAD (His-Cys)).

This sequence belongs to the oxygen-dependent FAD-linked oxidoreductase family. FAD serves as cofactor. The FAD cofactor is bound via a bicovalent 6-S-cysteinyl, 8alpha-N1-histidyl FAD linkage.

Its subcellular location is the secreted. The enzyme catalyses N,N'-diacetylchitobiose + O2 = N,N'-diacetylchitobiono-1,5-lactone + H2O2. The catalysed reaction is N,N',N''-triacetylchitotriose + O2 = N,N',N''-triacetylchitotriono-1,5-lactone + H2O2. It carries out the reaction N,N',N'',N'''-tetraacetylchitotetraose + O2 = N,N',N'',N'''-tetraacetylchitotetraono-1,5-lactone + H2O2. In terms of biological role, catalyzes the selective oxidation of C1 hydroxyl moieties on chitooligosaccharides with concomitant reduction of molecular oxygen to hydrogen peroxide. This results in the formation of the corresponding lactones, which typically undergo spontaneous hydrolysis. Chitooligosaccharides are homo- or heterooligomers of N-acetylglucosamine (GlcNAc) and D-glucosamine which are linked through beta-1,4-glycosidic bonds. For optimal substrate binding at least 2 GlcNAc units are needed, and chitooligosaccharide oxidase is most efficient on chitobiose, chitotriose and chitotetraose. This is Chitooligosaccharide oxidase from Gibberella zeae (strain ATCC MYA-4620 / CBS 123657 / FGSC 9075 / NRRL 31084 / PH-1) (Wheat head blight fungus).